Here is a 2149-residue protein sequence, read N- to C-terminus: MSDTPSTGFSMIHPTSSEGQVPSPRHLSLTHPVVAKRISFYKSGDPQFGGVRVVVNPRSFKSFDALLDNLSRKVPLPFGVRNISTPRGRHSITRLEELEDGESYLCSHGRKVQPVDLDKARRRPRPWLSSRAVSTHAPPHSVAAPGMPRAPRSLVVFRNGDPKTRRAVLLSRKVTQSFEAFLQHLTEVMQRPVVKLYATDGRRVPSLQAVILSSGAVVAAGREPFKPGNYDIQKYLLPARLPGISQRVYPKGNGKSESRKISTHMASSSRSQIYSVSSEKTHNNDCYLDYSFVPENYLALEKNDSQNLPIYPSEDDVEKSIIFNQDGTMTVEMKVRFRIKEEETIKWTTTVSKTGPSNNDEKSEMSFPGRTESRSSGLKLAACSFSADVSPTERSSNQEGSLAEEINIQMTDQEAETCSSASWENATVDTDIIQGTQDQAKHRFYRPPTPGLRRVRQKKSVIGSVTLVSETEVQEKMIGQFSYSEERESGENKSEYHMFTHSCSKMSSVSNKPVLVQINNSDQMEESSLERKKENRLLKSSAISAGVIEITSQKMLELSHNNGLPSTISNNSIVEEDVVDSVVSDNKTGIKNLRTYGNTSDRFSPVSADATHFSSNKSRADKNISEAPASVASSTVTARIDRLINEFAQCGLTKLPKTEKKILSSVASKKKKKKSQQQAINSRYQDGQLATTGILNKNERINAGGRITKEMILQDSDSPLKGGVLCEEDLRTSETVIESNTFCSKSNLNPMISKNFHRNKLNTTQNSKVQGLLTKRKSRPLRKISLGTPKKREIGQGDKVFPHNESKYSKSTCENKSLFHVFNLLEQKPKHFSGPRSQAEVASGYLRGMAKKSLVSKVTDSHITLKSQKKQKGDKLKASAILSKQHAATRANSLASLKKPDFPEDIAHPSVQTYIQNWLHNINPYPTLKPIKSAPVCKNEISVVNCNNSFSGNDPHTSSGKINNFVMESNKHITKIASLTGDNLCKEGDKSFIANDTGEDLCETQVGSLNDAYLVSLHEHCTSPQSAINDRNTKSRISPEKSGPEINLVYQEINLAKKRQSVEAAIQVDPIEEDTPKDLLPVLMLHQLQASVPSTPKTQNGVVRMPGSLADVSFPSAICNSSTNLLLAWLLVLNLKGSMNSFCQGDAHKTTNKSSETLALLEILKHIAITEEADDLKAAVANLVESTTNHFGLSEKEQDTVPIDLSANCSIVNIQSVPKCNENEGTQGIFSFDGGCSAVEACAPEVCVLELTYPPREVCTVNKAYVPKETCNLSDTFFPSDGYTVDRTSMNKACFVGEVCSLTDTVFSDKACAQKENHIYEGACATDETCVPVDVCNTTGFLNSKQNTYTDNLESTEELERGDDVQKDLNILTDPEYKNGFNTLVSHQNVSNLSPCGLCVSEEAEFDKKHSSADDFKNCSLNLFQDKNAYTSFDMEEPRTSEEPGSVTNSVTSSERNISELESFEELENQDTDIFNTEINVGEKATEEFIQEEIEASKTLELLDISSKNIMVEERKNGIIYETISKRLATPPSLVFCYDSKQNNEKETNEGETNMVKMMVKSMETGSYSESSPDMKKCIKSPVTSDWSDYRPDSDSEQAYKTSSDDPNDSGELEKEYNIGFVKRAIEKLYGKADIIKPSFFPGSTRKSQVCPYNSVEFQCTRRASLYDSEGQSFGSSERVSSSSPVLQEFQEEGQDKCDINHVRNNYCGGDIVEPGTKENDHSRVLTDIEEGVLIDKGKWLLKENHLLRMSYENPGVCGNADTTSVDTLLDNNSSEVPYSHFGNLAPGPTMDELSSSELEELTQPLELKCNYFKMPHGSDSEPFHEDLLGVHNETCDKERIANHHTEEKCPHQSERICTSVTHSFMSAGNKVYPVSDDAIKNQPLPGSNMIHGTLQETDSLDKLYALCGQHCPILTVTIQPVNEEDRGFAYRKESDIENFLGFYLWMKIHPYLLQTDKNMFREENNKASMRKNLINNATGDIFDEFYFSNIFDLMDKRRKQKRINFLELQEAGNLKKFQPDLKERFCMYFLHTSSLVVGNMNSNTQDLSSQTNEIFKAVDENNNLLNNRFQGSRTNLNQVVRENISRYFFEMLGQACLLDICQVETSLNISNRNILEELCMFEDENIFIWEEEDILNLTDLESSREQDL.

Positions 1 to 20 are enriched in polar residues; the sequence is MSDTPSTGFSMIHPTSSEGQ. A disordered region spans residues 1-25; that stretch reads MSDTPSTGFSMIHPTSSEGQVPSPR. Positions 36-118 constitute a Doublecortin 1 domain; the sequence is KRISFYKSGD…GRKVQPVDLD (83 aa). The interval 127–148 is disordered; it reads WLSSRAVSTHAPPHSVAAPGMP. One can recognise a Doublecortin 2 domain in the interval 152-231; that stretch reads RSLVVFRNGD…REPFKPGNYD (80 aa). Disordered regions lie at residues 351–373, 1435–1456, and 1583–1613; these read VSKT…RTES, MEEP…SSER, and VTSD…SGEL. Polar residues predominate over residues 1446–1456; it reads SVTNSVTSSER.

In terms of assembly, interacts (via the doublecortin domains) with microtubules. Interacts with RP1L1. Interacts with MAK.

It localises to the cytoplasm. It is found in the cytoskeleton. The protein localises to the cilium axoneme. The protein resides in the cell projection. Its subcellular location is the cilium. It localises to the photoreceptor outer segment. In terms of biological role, microtubule-associated protein regulating the stability and length of the microtubule-based axoneme of photoreceptors. Required for the differentiation of photoreceptor cells, it plays a role in the organization of the outer segment of rod and cone photoreceptors ensuring the correct orientation and higher-order stacking of outer segment disks along the photoreceptor axoneme. In Saimiri boliviensis boliviensis (Bolivian squirrel monkey), this protein is Oxygen-regulated protein 1 (RP1).